Here is a 444-residue protein sequence, read N- to C-terminus: C4-dicarboxylate transport protein (444 aa).

The next 8 membrane-spanning stretches (helical) occupy residues histidine 19–proline 39, leucine 55–methionine 75, isoleucine 90–leucine 110, isoleucine 161–leucine 181, leucine 199–isoleucine 219, leucine 230–glycine 250, leucine 343–isoleucine 363, and alanine 366–isoleucine 386.

The protein belongs to the dicarboxylate/amino acid:cation symporter (DAACS) (TC 2.A.23) family.

The protein localises to the cell inner membrane. Functionally, responsible for the transport of dicarboxylates such as succinate, fumarate, and malate from the periplasm across the membrane. This chain is C4-dicarboxylate transport protein, found in Allorhizobium ampelinum (strain ATCC BAA-846 / DSM 112012 / S4) (Agrobacterium vitis (strain S4)).